We begin with the raw amino-acid sequence, 154 residues long: Superoxide dismutase [Cu-Zn] (154 aa).

His-47, His-49, and His-64 together coordinate Cu cation. Cys-58 and Cys-147 are disulfide-bonded. Positions 62 to 89 (GPHFNPFKKNHGGPTDSERHVGDLGNVK) are disordered. His-64, His-72, His-81, and Asp-84 together coordinate Zn(2+). Position 121 (His-121) interacts with Cu cation. Residue Arg-144 coordinates substrate.

It belongs to the Cu-Zn superoxide dismutase family. Homodimer. The cofactor is Cu cation. It depends on Zn(2+) as a cofactor.

The protein resides in the cytoplasm. The catalysed reaction is 2 superoxide + 2 H(+) = H2O2 + O2. Destroys radicals which are normally produced within the cells and which are toxic to biological systems. This Yarrowia lipolytica (strain CLIB 122 / E 150) (Yeast) protein is Superoxide dismutase [Cu-Zn] (SOD1).